The following is a 210-amino-acid chain: Probable septum site-determining protein MinC (210 aa).

This sequence belongs to the MinC family. As to quaternary structure, interacts with MinD and FtsZ.

Functionally, cell division inhibitor that blocks the formation of polar Z ring septums. Rapidly oscillates between the poles of the cell to destabilize FtsZ filaments that have formed before they mature into polar Z rings. Prevents FtsZ polymerization. This is Probable septum site-determining protein MinC from Thermotoga sp. (strain RQ2).